The chain runs to 62 residues: Large ribosomal subunit protein bL28 (62 aa).

The interval 1–28 (MARKCVITGRKSRSGNSRSHAMNASKRT) is disordered. Residues 14–26 (SGNSRSHAMNASK) show a composition bias toward polar residues.

This sequence belongs to the bacterial ribosomal protein bL28 family.

The protein is Large ribosomal subunit protein bL28 of Bacillus licheniformis (strain ATCC 14580 / DSM 13 / JCM 2505 / CCUG 7422 / NBRC 12200 / NCIMB 9375 / NCTC 10341 / NRRL NRS-1264 / Gibson 46).